Here is a 322-residue protein sequence, read N- to C-terminus: Tetrahydromethanopterin S-methyltransferase subunit H (322 aa).

Belongs to the MtrH family. As to quaternary structure, the complex is composed of 8 subunits; MtrA, MtrB, MtrC, MtrD, MtrE, MtrF, MtrG and MtrH.

It carries out the reaction 5-methyl-5,6,7,8-tetrahydromethanopterin + coenzyme M + 2 Na(+)(in) = 5,6,7,8-tetrahydromethanopterin + methyl-coenzyme M + 2 Na(+)(out). It participates in one-carbon metabolism; methanogenesis from CO(2); methyl-coenzyme M from 5,10-methylene-5,6,7,8-tetrahydromethanopterin: step 2/2. Functionally, part of a complex that catalyzes the formation of methyl-coenzyme M and tetrahydromethanopterin from coenzyme M and methyl-tetrahydromethanopterin. This is an energy-conserving, sodium-ion translocating step. MtrH catalyzes the transfer of the methyl group from methyl-tetrahydromethanopterin to the corrinoid prosthetic group of MtrA. The polypeptide is Tetrahydromethanopterin S-methyltransferase subunit H (Methanopyrus kandleri (strain AV19 / DSM 6324 / JCM 9639 / NBRC 100938)).